Here is a 146-residue protein sequence, read N- to C-terminus: Meiotically up-regulated gene 151 protein (146 aa).

Residues methionine 1–alanine 40 are disordered. Positions asparagine 21–tryptophan 32 are enriched in basic and acidic residues.

It localises to the nucleus. Its function is as follows. Has a role in meiosis. The chain is Meiotically up-regulated gene 151 protein (mug151) from Schizosaccharomyces pombe (strain 972 / ATCC 24843) (Fission yeast).